The primary structure comprises 207 residues: Protein N-terminal glutamine amidohydrolase (207 aa).

Active-site residues include Cys30, His83, and Asp99.

The protein belongs to the NTAQ1 family. As to quaternary structure, monomer.

The protein resides in the cytoplasm. It localises to the cytosol. Its subcellular location is the nucleus. It carries out the reaction N-terminal L-glutaminyl-[protein] + H2O = N-terminal L-glutamyl-[protein] + NH4(+). Functionally, mediates the side-chain deamidation of N-terminal glutamine residues to glutamate, an important step in N-end rule pathway of protein degradation. Conversion of the resulting N-terminal glutamine to glutamate renders the protein susceptible to arginylation, polyubiquitination and degradation as specified by the N-end rule. Does not act on substrates with internal or C-terminal glutamine and does not act on non-glutamine residues in any position. Does not deaminate acetylated N-terminal glutamine. With the exception of proline, all tested second-position residues on substrate peptides do not greatly influence the activity. In contrast, a proline at position 2, virtually abolishes deamidation of N-terminal glutamine. The chain is Protein N-terminal glutamine amidohydrolase (Ntaq1) from Rattus norvegicus (Rat).